We begin with the raw amino-acid sequence, 679 residues long: Glycine--tRNA ligase beta subunit (679 aa).

This sequence belongs to the class-II aminoacyl-tRNA synthetase family. In terms of assembly, tetramer of two alpha and two beta subunits.

The protein localises to the cytoplasm. The enzyme catalyses tRNA(Gly) + glycine + ATP = glycyl-tRNA(Gly) + AMP + diphosphate. In Streptococcus pyogenes serotype M12 (strain MGAS9429), this protein is Glycine--tRNA ligase beta subunit.